The chain runs to 163 residues: Nucleotide-binding protein YajQ (163 aa).

The protein belongs to the YajQ family.

Its function is as follows. Nucleotide-binding protein. The protein is Nucleotide-binding protein YajQ of Salmonella paratyphi A (strain ATCC 9150 / SARB42).